Consider the following 149-residue polypeptide: Arginine repressor (149 aa).

This sequence belongs to the ArgR family.

It localises to the cytoplasm. Its pathway is amino-acid biosynthesis; L-arginine biosynthesis [regulation]. In terms of biological role, regulates arginine biosynthesis genes. In Bacillus cereus (strain ATCC 10987 / NRS 248), this protein is Arginine repressor.